The sequence spans 79 residues: Small ribosomal subunit protein bS18 (79 aa).

Belongs to the bacterial ribosomal protein bS18 family. As to quaternary structure, part of the 30S ribosomal subunit. Forms a tight heterodimer with protein bS6.

Binds as a heterodimer with protein bS6 to the central domain of the 16S rRNA, where it helps stabilize the platform of the 30S subunit. The chain is Small ribosomal subunit protein bS18 from Nitrobacter winogradskyi (strain ATCC 25391 / DSM 10237 / CIP 104748 / NCIMB 11846 / Nb-255).